Reading from the N-terminus, the 185-residue chain is Large ribosomal subunit protein bL25 (185 aa).

Belongs to the bacterial ribosomal protein bL25 family. CTC subfamily. In terms of assembly, part of the 50S ribosomal subunit; part of the 5S rRNA/L5/L18/L25 subcomplex. Contacts the 5S rRNA. Binds to the 5S rRNA independently of L5 and L18.

This is one of the proteins that binds to the 5S RNA in the ribosome where it forms part of the central protuberance. In Chlamydia caviae (strain ATCC VR-813 / DSM 19441 / 03DC25 / GPIC) (Chlamydophila caviae), this protein is Large ribosomal subunit protein bL25.